The following is a 486-amino-acid chain: Glutamyl-tRNA(Gln) amidotransferase subunit A (486 aa).

Catalysis depends on charge relay system residues K76 and S151. Residue S175 is the Acyl-ester intermediate of the active site.

The protein belongs to the amidase family. GatA subfamily. Heterotrimer of A, B and C subunits.

It carries out the reaction L-glutamyl-tRNA(Gln) + L-glutamine + ATP + H2O = L-glutaminyl-tRNA(Gln) + L-glutamate + ADP + phosphate + H(+). Functionally, allows the formation of correctly charged Gln-tRNA(Gln) through the transamidation of misacylated Glu-tRNA(Gln) in organisms which lack glutaminyl-tRNA synthetase. The reaction takes place in the presence of glutamine and ATP through an activated gamma-phospho-Glu-tRNA(Gln). This is Glutamyl-tRNA(Gln) amidotransferase subunit A from Marinomonas sp. (strain MWYL1).